We begin with the raw amino-acid sequence, 316 residues long: tRNA pseudouridine synthase B (316 aa).

Asp-47 (nucleophile) is an active-site residue.

It belongs to the pseudouridine synthase TruB family. Type 1 subfamily.

The enzyme catalyses uridine(55) in tRNA = pseudouridine(55) in tRNA. Responsible for synthesis of pseudouridine from uracil-55 in the psi GC loop of transfer RNAs. In Aliivibrio fischeri (strain ATCC 700601 / ES114) (Vibrio fischeri), this protein is tRNA pseudouridine synthase B.